Reading from the N-terminus, the 248-residue chain is tRNA (guanine-N(1)-)-methyltransferase (248 aa).

Residues glycine 116 and 136-141 (VGDYVL) each bind S-adenosyl-L-methionine.

The protein belongs to the RNA methyltransferase TrmD family. As to quaternary structure, homodimer.

The protein resides in the cytoplasm. It catalyses the reaction guanosine(37) in tRNA + S-adenosyl-L-methionine = N(1)-methylguanosine(37) in tRNA + S-adenosyl-L-homocysteine + H(+). Specifically methylates guanosine-37 in various tRNAs. The protein is tRNA (guanine-N(1)-)-methyltransferase of Psychromonas ingrahamii (strain DSM 17664 / CCUG 51855 / 37).